Here is a 701-residue protein sequence, read N- to C-terminus: Polyribonucleotide nucleotidyltransferase (701 aa).

Residues Asp487 and Asp493 each contribute to the Mg(2+) site. Residues 554-613 (PTMLAMKIDQDKIRDVIGKGGATIRAICEETKASIDIEDDGSIKIFGETKEAAEAAKQRV) enclose the KH domain. The S1 motif domain occupies 623–691 (GKIYVGKVER…NRGRIKLSIK (69 aa)).

It belongs to the polyribonucleotide nucleotidyltransferase family. As to quaternary structure, component of the RNA degradosome, which is a multiprotein complex involved in RNA processing and mRNA degradation. Mg(2+) is required as a cofactor.

Its subcellular location is the cytoplasm. It carries out the reaction RNA(n+1) + phosphate = RNA(n) + a ribonucleoside 5'-diphosphate. Its function is as follows. Involved in mRNA degradation. Catalyzes the phosphorolysis of single-stranded polyribonucleotides processively in the 3'- to 5'-direction. The chain is Polyribonucleotide nucleotidyltransferase from Stutzerimonas stutzeri (strain A1501) (Pseudomonas stutzeri).